The sequence spans 155 residues: SsrA-binding protein (155 aa).

This sequence belongs to the SmpB family.

It is found in the cytoplasm. In terms of biological role, required for rescue of stalled ribosomes mediated by trans-translation. Binds to transfer-messenger RNA (tmRNA), required for stable association of tmRNA with ribosomes. tmRNA and SmpB together mimic tRNA shape, replacing the anticodon stem-loop with SmpB. tmRNA is encoded by the ssrA gene; the 2 termini fold to resemble tRNA(Ala) and it encodes a 'tag peptide', a short internal open reading frame. During trans-translation Ala-aminoacylated tmRNA acts like a tRNA, entering the A-site of stalled ribosomes, displacing the stalled mRNA. The ribosome then switches to translate the ORF on the tmRNA; the nascent peptide is terminated with the 'tag peptide' encoded by the tmRNA and targeted for degradation. The ribosome is freed to recommence translation, which seems to be the essential function of trans-translation. This is SsrA-binding protein from Streptococcus equi subsp. zooepidemicus (strain MGCS10565).